A 326-amino-acid polypeptide reads, in one-letter code: ATP synthase gamma chain (326 aa).

This sequence belongs to the ATPase gamma chain family. As to quaternary structure, F-type ATPases have 2 components, CF(1) - the catalytic core - and CF(0) - the membrane proton channel. CF(1) has five subunits: alpha(3), beta(3), gamma(1), delta(1), epsilon(1). CF(0) has three main subunits: a, b and c.

Its subcellular location is the cell membrane. In terms of biological role, produces ATP from ADP in the presence of a proton gradient across the membrane. The gamma chain is believed to be important in regulating ATPase activity and the flow of protons through the CF(0) complex. In Corynebacterium efficiens (strain DSM 44549 / YS-314 / AJ 12310 / JCM 11189 / NBRC 100395), this protein is ATP synthase gamma chain.